We begin with the raw amino-acid sequence, 480 residues long: Major capsid protein (480 aa).

The protein localises to the virion. In terms of biological role, major protein of the capsid. This is Major capsid protein (MCP-1) from Trichoplusia ni ascovirus 2c (TnAV-2c).